The sequence spans 713 residues: Calpastatin (713 aa).

2 disordered regions span residues 1–187 (MNPT…LDPM) and 211–506 (DKKE…PVLP). Over residues 21 to 30 (PNKKRHKKQA) the composition is skewed to basic residues. Lys32 is covalently cross-linked (Glycyl lysine isopeptide (Lys-Gly) (interchain with G-Cter in SUMO2)). Residues 46–63 (VVHEKKTQEVKPKEHPEP) show a composition bias toward basic and acidic residues. The residue at position 50 (Lys50) is an N6-acetyllysine. Residues 85–94 (SRSNEQPTSE) show a composition bias toward polar residues. Phosphoserine occurs at positions 87 and 134. Phosphothreonine is present on Thr136. An Inhibitory domain 1 repeat occupies 171-223 (TEEDNTTYTGPEVLDPMSSTYIEELGKREVTLPPKYRELLDKKEGIPVPPPDT). Ser244 carries the post-translational modification Phosphoserine. Basic and acidic residues-rich tracts occupy residues 248-258 (DGKKTEKEKST), 304-332 (RKSE…KKCG), and 342-367 (YRLK…KPLS). The Inhibitory domain 2 repeat unit spans residues 307-359 (EPELDLSSIKEIDEAKAKEEKLKKCGEDDETVPPEYRLKPAMDKDGKPLLPEA). Ser367, Ser369, and Ser376 each carry phosphoserine. Acidic residues predominate over residues 370–379 (ELIDELSEDF). The span at 380 to 397 (DQSKRKEKQSKPTEKTKE) shows a compositional bias: basic and acidic residues. Ser441 carries the post-translational modification Phosphoserine. The span at 443–502 (GKKEADPEDGKPVEDKVKEKAKEEDREKLGEKEETIPPDYRLEEVKDKDGKTLPHKDPKE) shows a compositional bias: basic and acidic residues. Residues 447-500 (ADPEDGKPVEDKVKEKAKEEDREKLGEKEETIPPDYRLEEVKDKDGKTLPHKDP) form an Inhibitory domain 3 repeat. Phosphoserine is present on residues Ser517 and Ser528. Residues 536 to 713 (SAAVSEVVSQ…KQKSDGKSTS (178 aa)) are disordered. Polar residues predominate over residues 542 to 553 (VVSQTSAPTTHS). Ser575 and Ser577 each carry phosphoserine. An Inhibitory domain 4 repeat occupies 583–636 (PDPDENKPIEDKVKEKAEAEHRDKLGERDDTIPPEYRHLLDKDEEGKSTKPPTK). Basic and acidic residues-rich tracts occupy residues 583–646 (PDPD…KPEA) and 691–713 (KAKD…KSTS).

The protein belongs to the protease inhibitor I27 (calpastatin) family.

Specific inhibition of calpain (calcium-dependent cysteine protease). Plays a key role in postmortem tenderization of meat and have been proposed to be involved in muscle protein degradation in living tissue. In Sus scrofa (Pig), this protein is Calpastatin (CAST).